A 569-amino-acid chain; its full sequence is Peptide transporter PTR_C (569 aa).

Basic and acidic residues predominate over residues 1–25; sequence MSQNVDEKVVHDDASVIRSVDRSES. Residues 1-43 form a disordered region; the sequence is MSQNVDEKVVHDDASVIRSVDRSESDSYPDSVSPEGAEPSEEE. Residues 54–74 form a helical membrane-spanning segment; the sequence is VPLACWLVAIVELAERFSYYG. A glycan (N-linked (GlcNAc...) asparagine) is linked at N98. Helical transmembrane passes span 104-124, 134-154, and 159-179; these read ALSY…AWVA, ISIF…TSLP, and NTSL…TGGV. The N-linked (GlcNAc...) asparagine glycan is linked to N212. 8 helical membrane passes run 215 to 235, 245 to 265, 322 to 342, 366 to 386, 398 to 418, 444 to 464, 479 to 499, and 510 to 530; these read IQNV…SVIA, FWAA…ALFL, ALYA…YGQM, IDSI…YPFI, IFWG…LQHF, VALQ…ASIT, SFIM…GIAL, and WTYT…WFLF.

It belongs to the major facilitator superfamily. Proton-dependent oligopeptide transporter (POT/PTR) (TC 2.A.17) family.

The protein resides in the cell membrane. The catalysed reaction is a dipeptide(out) + H(+)(out) = a dipeptide(in) + H(+)(in). It carries out the reaction an L-amino acid tripeptide(out) + H(+)(out) = an L-amino acid tripeptide(in) + H(+)(in). Functionally, peptide transporter that exploits the inwardly directed proton motive force to facilitate the cellular uptake of di/tripeptides. Shows strong uptake specificity towards the dipeptides Tyr-Phe and Leu-Gly and the tripeptide Phe-Gly-Gly, when compared to PTR_A and PTR_B. Also able to import peptide-based antifungals such as the peptide-nucleoside drug nikkomycin Z as well as the glucosamine-6-phosphate synthase inhibitor, L-norvalyl-N3-(4-methoxyfumaroyl)-L-2,3-diaminopropionoic acid (Nva-FMDP). This chain is Peptide transporter PTR_C, found in Candidozyma auris (Yeast).